Consider the following 197-residue polypeptide: Isochorismatase domain-containing protein 2 (197 aa).

Belongs to the isochorismatase family.

This Danio rerio (Zebrafish) protein is Isochorismatase domain-containing protein 2 (isoc2).